Here is a 337-residue protein sequence, read N- to C-terminus: Protein-glutamate methylesterase/protein-glutamine glutaminase of group 3 operon (337 aa).

The 118-residue stretch at 2–119 (KIAIVNDMPL…GDAREAAAPL (118 aa)) folds into the Response regulatory domain. Position 53 is a 4-aspartylphosphate (Asp53). The 194-residue stretch at 144–337 (PLREASQRRG…AGRLTEFFAK (194 aa)) folds into the CheB-type methylesterase domain. Catalysis depends on residues Ser160, His187, and Asp280.

The protein belongs to the CheB family. Phosphorylated by CheA. Phosphorylation of the N-terminal regulatory domain activates the methylesterase activity.

It is found in the cytoplasm. The enzyme catalyses [protein]-L-glutamate 5-O-methyl ester + H2O = L-glutamyl-[protein] + methanol + H(+). It carries out the reaction L-glutaminyl-[protein] + H2O = L-glutamyl-[protein] + NH4(+). Its function is as follows. Involved in chemotaxis. Part of a chemotaxis signal transduction system that modulates chemotaxis in response to various stimuli. Catalyzes the demethylation of specific methylglutamate residues introduced into the chemoreceptors (methyl-accepting chemotaxis proteins or MCP) by CheR. Also mediates the irreversible deamidation of specific glutamine residues to glutamic acid. This chain is Protein-glutamate methylesterase/protein-glutamine glutaminase of group 3 operon, found in Pseudomonas putida (strain ATCC 47054 / DSM 6125 / CFBP 8728 / NCIMB 11950 / KT2440).